The chain runs to 108 residues: DNA-binding protein HBbu (108 aa).

Belongs to the bacterial histone-like protein family.

Its function is as follows. Histone-like DNA-binding protein which is capable of wrapping DNA to stabilize it, and thus to prevent its denaturation under extreme environmental conditions. The polypeptide is DNA-binding protein HBbu (hbb) (Borrelia turicatae).